The following is a 410-amino-acid chain: Caspase-1 (410 aa).

Residues 1-91 (MADKVLKGKR…HLAETLGLSS (91 aa)) form the CARD domain. Positions 1-119 (MADKVLKGKR…PLPASVNNMP (119 aa)) are excised as a propeptide. The segment covering 88 to 104 (GLSSSPQSGNSQNTTDS) has biased composition (polar residues). The segment at 88 to 125 (GLSSSPQSGNSQNTTDSEVAFPPLPASVNNMPGPAEPE) is disordered. Catalysis depends on residues H235 and C284. Positions 297–322 (SPAAPMDSTSQMGSSLSQVGDNLEDD) are excised as a propeptide.

Belongs to the peptidase C14A family. As to quaternary structure, heterotetramer that consists of two anti-parallel arranged heterodimers, each one formed by a 20 kDa (Caspase-1 subunit p20) and a 10 kDa (Caspase-1 subunit p10) subunit. May be a component of the inflammasome, a protein complex which also includes PYCARD, CARD8 and NLRP2 and whose function would be the activation of pro-inflammatory caspases. Component of the AIM2 PANoptosome complex, a multiprotein complex that drives inflammatory cell death (PANoptosis). Both the p10 and p20 subunits interact with MEFV. Interacts with CARD17P/INCA and CARD18. Interacts with SERPINB1; this interaction regulates CASP1 activity. Heterotetramer that consists of two anti-parallel arranged heterodimers, each one formed by a 20 kDa (Caspase-1 subunit p20) and a 10 kDa (Caspase-1 subunit p10) subunit. In terms of processing, the two subunits are derived from the precursor sequence by an autocatalytic mechanism. Ubiquitinated via 'Lys-11'-linked polyubiquitination. Deubiquitinated by USP8.

It localises to the cytoplasm. It is found in the cell membrane. The catalysed reaction is Strict requirement for an Asp residue at position P1 and has a preferred cleavage sequence of Tyr-Val-Ala-Asp-|-.. Functionally, thiol protease involved in a variety of inflammatory processes by proteolytically cleaving other proteins, such as the precursors of the inflammatory cytokines interleukin-1 beta (IL1B) and interleukin 18 (IL18) as well as the pyroptosis inducer Gasdermin-D (GSDMD), into active mature peptides. Plays a key role in cell immunity as an inflammatory response initiator: once activated through formation of an inflammasome complex, it initiates a pro-inflammatory response through the cleavage of the two inflammatory cytokines IL1B and IL18, releasing the mature cytokines which are involved in a variety of inflammatory processes. Cleaves a tetrapeptide after an Asp residue at position P1. Also initiates pyroptosis, a programmed lytic cell death pathway, through cleavage of GSDMD. In contrast to cleavage of interleukin IL1B, recognition and cleavage of GSDMD is not strictly dependent on the consensus cleavage site but depends on an exosite interface on CASP1 that recognizes and binds the Gasdermin-D, C-terminal (GSDMD-CT) part. Cleaves and activates CASP7 in response to bacterial infection, promoting plasma membrane repair. Upon inflammasome activation, during DNA virus infection but not RNA virus challenge, controls antiviral immunity through the cleavage of CGAS, rendering it inactive. In apoptotic cells, cleaves SPHK2 which is released from cells and remains enzymatically active extracellularly. This Felis catus (Cat) protein is Caspase-1 (CASP1).